Reading from the N-terminus, the 497-residue chain is Cytochrome P450 71A16 (497 aa).

The chain crosses the membrane as a helical span at residues 1–21 (MEMMILISLCLTTFLTILLFF). Cys439 serves as a coordination point for heme.

The protein belongs to the cytochrome P450 family. Heme is required as a cofactor.

The protein resides in the membrane. Possesses triterpene oxidizing activity. Catalyzes the C23 hydroxylation of marneral to form 23-hydroxymarneral. Catalyzes the C23 hydroxylation of marnerol to form 23-hydroxymarnerol. The chain is Cytochrome P450 71A16 (CYP71A16) from Arabidopsis thaliana (Mouse-ear cress).